The primary structure comprises 532 residues: Nucleobase-ascorbate transporter 6 (532 aa).

Positions 1–24 are disordered; the sequence is MAGGGAPAPKADEPQPHPPKDQLP. The segment covering 10–20 has biased composition (basic and acidic residues); it reads KADEPQPHPPK. 12 helical membrane passes run 39-59, 75-95, 97-117, 137-157, 163-185, 192-212, 223-243, 289-309, 361-381, 392-414, 426-446, and 463-483; these read AILL…LIPT, VIQT…LFGT, LPAV…IILS, TQGA…SGLW, FLSP…EFGF, IEIG…LPHV, FAVI…TVGG, FAMM…FVAV, VGSR…SILG, APII…LSFL, FILG…NEYT, and DMVN…AFFL.

Belongs to the nucleobase:cation symporter-2 (NCS2) (TC 2.A.40) family. In terms of tissue distribution, expressed in the apical region of cotyledons 4 days after imbibition (DAI). Expressed in the whole vasculature at 12 DAI. Expressed in the root central cylinder and lateral root primordia. Expressed in the vasculature of sepals, filaments, carpels and developing siliques.

The protein localises to the membrane. This Arabidopsis thaliana (Mouse-ear cress) protein is Nucleobase-ascorbate transporter 6 (NAT6).